A 700-amino-acid polypeptide reads, in one-letter code: Neoverrucotoxin subunit beta (700 aa).

The region spanning 506–700 (HMPGVETIKD…QKVNGQIKLL (195 aa)) is the B30.2/SPRY domain.

Belongs to the SNTX/VTX toxin family. In terms of assembly, heterodimer of alpha and beta subunits. Not glycosylated. Post-translationally, four intrachain disulfide linkages are present in the heterodimer. No interchain disulfide bound links the two subunits. As to expression, expressed by the venom gland.

Its subcellular location is the secreted. Has hemolytic and lethal activities. Its hemolytic activity is inhibited by anionic lipids, especially potently by cardiolipin. This is Neoverrucotoxin subunit beta from Synanceia verrucosa (Reef stonefish).